Reading from the N-terminus, the 413-residue chain is Multifunctional CCA protein (413 aa).

2 residues coordinate ATP: G8 and R11. CTP contacts are provided by G8 and R11. Mg(2+)-binding residues include D21 and D23. ATP contacts are provided by R91, R137, and R140. CTP-binding residues include R91, R137, and R140. Residues 228-329 (TGIHTLMVLA…LKVFDKADAW (102 aa)) form the HD domain.

It belongs to the tRNA nucleotidyltransferase/poly(A) polymerase family. Bacterial CCA-adding enzyme type 1 subfamily. In terms of assembly, monomer. Can also form homodimers and oligomers. Mg(2+) serves as cofactor. The cofactor is Ni(2+).

It carries out the reaction a tRNA precursor + 2 CTP + ATP = a tRNA with a 3' CCA end + 3 diphosphate. It catalyses the reaction a tRNA with a 3' CCA end + 2 CTP + ATP = a tRNA with a 3' CCACCA end + 3 diphosphate. Functionally, catalyzes the addition and repair of the essential 3'-terminal CCA sequence in tRNAs without using a nucleic acid template. Adds these three nucleotides in the order of C, C, and A to the tRNA nucleotide-73, using CTP and ATP as substrates and producing inorganic pyrophosphate. tRNA 3'-terminal CCA addition is required both for tRNA processing and repair. Also involved in tRNA surveillance by mediating tandem CCA addition to generate a CCACCA at the 3' terminus of unstable tRNAs. While stable tRNAs receive only 3'-terminal CCA, unstable tRNAs are marked with CCACCA and rapidly degraded. In Aeromonas salmonicida (strain A449), this protein is Multifunctional CCA protein.